The primary structure comprises 101 residues: Urease subunit beta (101 aa).

Belongs to the urease beta subunit family. Heterotrimer of UreA (gamma), UreB (beta) and UreC (alpha) subunits. Three heterotrimers associate to form the active enzyme.

Its subcellular location is the cytoplasm. The catalysed reaction is urea + 2 H2O + H(+) = hydrogencarbonate + 2 NH4(+). The protein operates within nitrogen metabolism; urea degradation; CO(2) and NH(3) from urea (urease route): step 1/1. The protein is Urease subunit beta of Pseudomonas fluorescens (strain SBW25).